Consider the following 273-residue polypeptide: Protein PERCC1 (273 aa).

Disordered regions lie at residues 18–84 (SHES…PETP) and 253–273 (GGSE…LAEV). Residues 28–56 (EAPEISEEEEEEEEEEEEEEEEEEVDQDQ) show a composition bias toward acidic residues. A compositionally biased stretch (polar residues) spans 67–83 (DSQSSGVVPQDPSSPET).

Specifically expressed in the stomach, pancreas and intestine. In gastrointestinal tissue, expression is primarily restricted to gastric G cells and duodenal enteroendocrine cells (EECs).

Its function is as follows. Plays a critical role in intestinal function by promoting the development of enteroendocrine cells (EECs) of the gastrointestinal tract and pancreas. It is thereby required for normal enteroendocrine peptide hormone secretion. The protein is Protein PERCC1 of Mus musculus (Mouse).